The chain runs to 282 residues: Large ribosomal subunit protein uL2 (282 aa).

2 disordered regions span residues 31–56 (EKSL…RHRG) and 226–282 (SVMN…GSKM). Positions 35–44 (LDSQSHSAGR) are enriched in polar residues. A compositionally biased stretch (basic residues) spans 257–266 (TVGKKTRSKK).

This sequence belongs to the universal ribosomal protein uL2 family. As to quaternary structure, part of the 50S ribosomal subunit. Forms a bridge to the 30S subunit in the 70S ribosome.

One of the primary rRNA binding proteins. Required for association of the 30S and 50S subunits to form the 70S ribosome, for tRNA binding and peptide bond formation. It has been suggested to have peptidyltransferase activity; this is somewhat controversial. Makes several contacts with the 16S rRNA in the 70S ribosome. The protein is Large ribosomal subunit protein uL2 of Levilactobacillus brevis (strain ATCC 367 / BCRC 12310 / CIP 105137 / JCM 1170 / LMG 11437 / NCIMB 947 / NCTC 947) (Lactobacillus brevis).